The chain runs to 55 residues: Locustin (55 aa).

4 disulfides stabilise this stretch: Cys-5–Cys-40, Cys-7–Cys-36, Cys-10–Cys-32, and Cys-17–Cys-54.

In terms of assembly, monomer. As to expression, stored in hemocyte granules and secreted into the hemolymph.

It localises to the secreted. In terms of biological role, has antibacterial activity against Gram-positive bacterium M.luteus. The polypeptide is Locustin (Locusta migratoria (Migratory locust)).